The primary structure comprises 225 residues: UPF0758 protein BPP1850 (225 aa).

Positions 103-225 (ALANPDLVRR…TVSMAAQGHL (123 aa)) constitute an MPN domain. 3 residues coordinate Zn(2+): histidine 174, histidine 176, and aspartate 187. The short motif at 174–187 (HNHPGGTAAASAAD) is the JAMM motif element.

The protein belongs to the UPF0758 family.

This is UPF0758 protein BPP1850 from Bordetella parapertussis (strain 12822 / ATCC BAA-587 / NCTC 13253).